The chain runs to 491 residues: Lysine--tRNA ligase (491 aa).

2 residues coordinate Mg(2+): Glu-400 and Glu-407.

It belongs to the class-II aminoacyl-tRNA synthetase family. As to quaternary structure, homodimer. It depends on Mg(2+) as a cofactor.

The protein localises to the cytoplasm. The catalysed reaction is tRNA(Lys) + L-lysine + ATP = L-lysyl-tRNA(Lys) + AMP + diphosphate. The chain is Lysine--tRNA ligase from Mesomycoplasma hyopneumoniae (strain J / ATCC 25934 / NCTC 10110) (Mycoplasma hyopneumoniae).